The chain runs to 257 residues: Phosphatidylglycerol--prolipoprotein diacylglyceryl transferase (257 aa).

7 helical membrane-spanning segments follow: residues 13-33 (FGPI…AVGG), 49-69 (FLLN…RLMF), 88-108 (IYEG…AGLY), 123-143 (FAVV…IFNH), 152-172 (FFFG…FLLI), 186-202 (YQFW…RGVF), and 223-243 (IGLF…AYWM). Position 136 (Arg-136) interacts with a 1,2-diacyl-sn-glycero-3-phospho-(1'-sn-glycerol).

Belongs to the Lgt family.

The protein resides in the cell membrane. It carries out the reaction L-cysteinyl-[prolipoprotein] + a 1,2-diacyl-sn-glycero-3-phospho-(1'-sn-glycerol) = an S-1,2-diacyl-sn-glyceryl-L-cysteinyl-[prolipoprotein] + sn-glycerol 1-phosphate + H(+). Its pathway is protein modification; lipoprotein biosynthesis (diacylglyceryl transfer). Its function is as follows. Catalyzes the transfer of the diacylglyceryl group from phosphatidylglycerol to the sulfhydryl group of the N-terminal cysteine of a prolipoprotein, the first step in the formation of mature lipoproteins. The protein is Phosphatidylglycerol--prolipoprotein diacylglyceryl transferase of Caldanaerobacter subterraneus subsp. tengcongensis (strain DSM 15242 / JCM 11007 / NBRC 100824 / MB4) (Thermoanaerobacter tengcongensis).